The sequence spans 430 residues: DNA repair protein recA homolog 3, mitochondrial (430 aa).

The transit peptide at 1–35 (MARILRNVYSLRSSLFSSELLRRSVVGTSFQLRGF) directs the protein to the mitochondrion. Residue 119 to 126 (GPEASGKT) participates in ATP binding. The interval 385-415 (DEAADKETESESEEEDSLRVVVSPDNTDDES) is disordered.

Belongs to the RecA family.

The protein resides in the mitochondrion. In terms of biological role, involved in recombination ability and DNA strand transfer activity. The chain is DNA repair protein recA homolog 3, mitochondrial from Arabidopsis thaliana (Mouse-ear cress).